Reading from the N-terminus, the 692-residue chain is Elongation factor G (692 aa).

Positions 8–283 constitute a tr-type G domain; the sequence is EMTRNIGIMA…AVLDYMPAPT (276 aa). GTP is bound by residues 17-24, 81-85, and 135-138; these read AHIDAGKT, DTPGH, and NKMD.

This sequence belongs to the TRAFAC class translation factor GTPase superfamily. Classic translation factor GTPase family. EF-G/EF-2 subfamily.

The protein localises to the cytoplasm. In terms of biological role, catalyzes the GTP-dependent ribosomal translocation step during translation elongation. During this step, the ribosome changes from the pre-translocational (PRE) to the post-translocational (POST) state as the newly formed A-site-bound peptidyl-tRNA and P-site-bound deacylated tRNA move to the P and E sites, respectively. Catalyzes the coordinated movement of the two tRNA molecules, the mRNA and conformational changes in the ribosome. This Citrifermentans bemidjiense (strain ATCC BAA-1014 / DSM 16622 / JCM 12645 / Bem) (Geobacter bemidjiensis) protein is Elongation factor G.